We begin with the raw amino-acid sequence, 199 residues long: MSLVPMVVEQTSRGERSYDIFSRLLKERIIMLSGEVNDDSSNLIVSQLLFLESEDPDKDISIYINSPGGSITAGMAIYDTMQYIKPDVSTICVGMAASMGAFLLSSGANGKRYALPNAEIMIHQPLGGFQGQATDIQIHANRILKIKESLNKILSENTNQPLEVIEADVERDNFMTADEAKTYGLVDKVITKNETGKDK.

The Nucleophile role is filled by serine 98. Histidine 123 is a catalytic residue.

Belongs to the peptidase S14 family. As to quaternary structure, fourteen ClpP subunits assemble into 2 heptameric rings which stack back to back to give a disk-like structure with a central cavity, resembling the structure of eukaryotic proteasomes.

It is found in the cytoplasm. The catalysed reaction is Hydrolysis of proteins to small peptides in the presence of ATP and magnesium. alpha-casein is the usual test substrate. In the absence of ATP, only oligopeptides shorter than five residues are hydrolyzed (such as succinyl-Leu-Tyr-|-NHMec, and Leu-Tyr-Leu-|-Tyr-Trp, in which cleavage of the -Tyr-|-Leu- and -Tyr-|-Trp bonds also occurs).. Cleaves peptides in various proteins in a process that requires ATP hydrolysis. Has a chymotrypsin-like activity. Plays a major role in the degradation of misfolded proteins. The polypeptide is ATP-dependent Clp protease proteolytic subunit (Clostridium botulinum (strain Eklund 17B / Type B)).